Consider the following 399-residue polypeptide: Sex hormone-binding globulin (399 aa).

Residues 1–29 (MENRDSVASLLLLLLLLPPPHTHQGQVLR) form the signal peptide. 2 consecutive Laminin G-like domains span residues 43-214 (RYLS…LGNC) and 221-387 (GLFF…THSC). Asn160 carries N-linked (GlcNAc...) asparagine glycosylation. An intrachain disulfide couples Cys191 to Cys214. N-linked (GlcNAc...) asparagine glycosylation is found at Asn270, Asn353, Asn377, and Asn393. The cysteines at positions 359 and 387 are disulfide-linked.

As to quaternary structure, homodimer. Post-translationally, differentially glycosylated in liver (SHBG) and testis (ABP).

It is found in the secreted. Functionally, functions as an androgen transport protein, but may also be involved in receptor mediated processes. Each dimer binds one molecule of steroid. Specific for 5-alpha-dihydrotestosterone, testosterone, and 17-beta-estradiol. Regulates the plasma metabolic clearance rate of steroid hormones by controlling their plasma concentration. In Phodopus sungorus (Striped hairy-footed hamster), this protein is Sex hormone-binding globulin (SHBG).